The following is a 369-amino-acid chain: GDSL esterase/lipase At5g41890 (369 aa).

Catalysis depends on Ser-32, which acts as the Nucleophile. Residues Asp-334 and His-337 contribute to the active site.

The protein belongs to the 'GDSL' lipolytic enzyme family.

The chain is GDSL esterase/lipase At5g41890 from Arabidopsis thaliana (Mouse-ear cress).